Reading from the N-terminus, the 410-residue chain is Methylamine dehydrogenase heavy chain (410 aa).

The signal sequence occupies residues 1–35 (MTHAYTKVRQALCYGSATLGAAALAALIAAGSAAA).

The protein belongs to the aromatic amine dehydrogenase heavy chain family. As to quaternary structure, tetramer of two light and two heavy chains.

It localises to the periplasm. It catalyses the reaction 2 oxidized [amicyanin] + methylamine + H2O = 2 reduced [amicyanin] + formaldehyde + NH4(+) + 2 H(+). Functionally, methylamine dehydrogenase carries out the oxidation of methylamine. Electrons are passed from methylamine dehydrogenase to amicyanin. The chain is Methylamine dehydrogenase heavy chain (mauB) from Methylorubrum extorquens (strain ATCC 14718 / DSM 1338 / JCM 2805 / NCIMB 9133 / AM1) (Methylobacterium extorquens).